A 361-amino-acid chain; its full sequence is Tyrosine--tRNA ligase (361 aa).

L-tyrosine contacts are provided by Y36, Y162, Q166, D169, and Q184. Residues K236–S240 carry the 'KMSKS' region motif. Position 239 (K239) interacts with ATP.

This sequence belongs to the class-I aminoacyl-tRNA synthetase family. TyrS type 4 subfamily. Homodimer.

It is found in the cytoplasm. The catalysed reaction is tRNA(Tyr) + L-tyrosine + ATP = L-tyrosyl-tRNA(Tyr) + AMP + diphosphate + H(+). Catalyzes the attachment of tyrosine to tRNA(Tyr) in a two-step reaction: tyrosine is first activated by ATP to form Tyr-AMP and then transferred to the acceptor end of tRNA(Tyr). This is Tyrosine--tRNA ligase from Saccharolobus islandicus (strain L.S.2.15 / Lassen #1) (Sulfolobus islandicus).